The chain runs to 615 residues: DNA mismatch repair protein MutL (615 aa).

The span at 378–391 (PAPASGSRPAAPWP) shows a compositional bias: low complexity. The segment at 378-397 (PAPASGSRPAAPWPNAQPGY) is disordered.

This sequence belongs to the DNA mismatch repair MutL/HexB family.

In terms of biological role, this protein is involved in the repair of mismatches in DNA. It is required for dam-dependent methyl-directed DNA mismatch repair. May act as a 'molecular matchmaker', a protein that promotes the formation of a stable complex between two or more DNA-binding proteins in an ATP-dependent manner without itself being part of a final effector complex. The sequence is that of DNA mismatch repair protein MutL from Escherichia coli O127:H6 (strain E2348/69 / EPEC).